Reading from the N-terminus, the 489-residue chain is Coronin-1B (489 aa).

Ser2 bears the Phosphoserine; by PKC mark. 6 WD repeats span residues 18 to 72, 73 to 122, 123 to 166, 167 to 210, 211 to 256, and 257 to 296; these read QPVK…GRID, KAYP…SPLT, EPVV…GTAE, ELYR…RGTL, VAER…ENLE, and EPMA…RYFE. The interval 408–444 is disordered; that stretch reads RRNVLSDSRPAMAPGSSHLGAPASTTTAADATPSGSL. Residues 428 to 441 show a composition bias toward low complexity; it reads APASTTTAADATPS. Residues 449–474 are a coiled coil; sequence EAGKLEEVMQELRALRALVKEQGDRI.

It belongs to the WD repeat coronin family. Forms homooligomers, but does not form complexes with the other coronins. Interacts with Arp2/3 complex components, including ACTR2, ARPC1B and ARPC2. Binds actin. Post-translationally, phosphorylation by PKC on Ser-2 regulates the interaction with the Arp2/3 complex and cell motility in fibroblasts. Phosphorylation does not seem to affect subcellular location.

Its subcellular location is the cytoplasm. The protein resides in the cytoskeleton. It is found in the stress fiber. Regulates leading edge dynamics and cell motility in fibroblasts. May be involved in cytokinesis and signal transduction. This Homo sapiens (Human) protein is Coronin-1B (CORO1B).